The chain runs to 86 residues: Protein Tat (86 aa).

Residues 1 to 24 form an interaction with human CREBBP region; it reads MEPVDPRLEPWKHPGSQPKTACTN. The tract at residues 1–48 is transactivation; that stretch reads MEPVDPRLEPWKHPGSQPKTACTNCYCKKCCFHCQVCFITKALGISYG. Positions 22, 25, and 27 each coordinate Zn(2+). The interval 22–37 is cysteine-rich; it reads CTNCYCKKCCFHCQVC. An N6-acetyllysine; by host PCAF modification is found at lysine 28. 4 residues coordinate Zn(2+): cysteine 30, histidine 33, cysteine 34, and cysteine 37. A core region spans residues 38–48; sequence FITKALGISYG. Positions 48 to 59 are enriched in basic residues; it reads GRKKRRQRRRAH. The tract at residues 48 to 86 is disordered; it reads GRKKRRQRRRAHQNSQTHQASLSKQPTSQPRGDPTGPKE. Residues 49-57 carry the Nuclear localization signal, RNA-binding (TAR), and protein transduction motif; it reads RKKRRQRRR. Residues 49-86 are interaction with the host capping enzyme RNGTT; the sequence is RKKRRQRRRAHQNSQTHQASLSKQPTSQPRGDPTGPKE. 2 positions are modified to N6-acetyllysine; by host EP300 and GCN5L2: lysine 50 and lysine 51. An asymmetric dimethylarginine; by host PRMT6 mark is found at arginine 52 and arginine 53. Residues 60–77 are compositionally biased toward polar residues; the sequence is QNSQTHQASLSKQPTSQP. A Glycyl lysine isopeptide (Lys-Gly) (interchain with G-Cter in ubiquitin) cross-link involves residue lysine 71. The Cell attachment site signature appears at 78-80; it reads RGD.

Belongs to the lentiviruses Tat family. In terms of assembly, interacts with host CCNT1. Associates with the P-TEFb complex composed at least of Tat, P-TEFb (CDK9 and CCNT1), TAR RNA, RNA Pol II. Recruits the HATs CREBBP, TAF1/TFIID, EP300, PCAF and GCN5L2. Interacts with host KAT5/Tip60; this interaction targets the latter to degradation. Interacts with the host deacetylase SIRT1. Interacts with host capping enzyme RNGTT; this interaction stimulates RNGTT. Binds to host KDR, and to the host integrins ITGAV/ITGB3 and ITGA5/ITGB1. Interacts with host KPNB1/importin beta-1 without previous binding to KPNA1/importin alpha-1. Interacts with EIF2AK2. Interacts with host nucleosome assembly protein NAP1L1; this interaction may be required for the transport of Tat within the nucleus, since the two proteins interact at the nuclear rim. Interacts with host C1QBP/SF2P32; this interaction involves lysine-acetylated Tat. Interacts with the host chemokine receptors CCR2, CCR3 and CXCR4. Interacts with host DPP4/CD26; this interaction may trigger an anti-proliferative effect. Interacts with host LDLR. Interacts with the host extracellular matrix metalloproteinase MMP1. Interacts with host PRMT6; this interaction mediates Tat's methylation. Interacts with, and is ubiquitinated by MDM2/Hdm2. Interacts with host PSMC3 and HTATIP2. Interacts with STAB1; this interaction may overcome SATB1-mediated repression of IL2 and IL2RA (interleukin) in T cells by binding to the same domain than HDAC1. Interacts (when acetylated) with human CDK13, thereby increasing HIV-1 mRNA splicing and promoting the production of the doubly spliced HIV-1 protein Nef. Interacts with host TBP; this interaction modulates the activity of transcriptional pre-initiation complex. Interacts with host RELA. Interacts with host PLSCR1; this interaction negatively regulates Tat transactivation activity by altering its subcellular distribution. Post-translationally, asymmetrical arginine methylation by host PRMT6 seems to diminish the transactivation capacity of Tat and affects the interaction with host CCNT1. Acetylation by EP300, CREBBP, GCN5L2/GCN5 and PCAF regulates the transactivation activity of Tat. EP300-mediated acetylation of Lys-50 promotes dissociation of Tat from the TAR RNA through the competitive binding to PCAF's bromodomain. In addition, the non-acetylated Tat's N-terminus can also interact with PCAF. PCAF-mediated acetylation of Lys-28 enhances Tat's binding to CCNT1. Lys-50 is deacetylated by SIRT1. In terms of processing, polyubiquitination by host MDM2 does not target Tat to degradation, but activates its transactivation function and fosters interaction with CCNT1 and TAR RNA. Post-translationally, phosphorylated by EIF2AK2 on serine and threonine residues adjacent to the basic region important for TAR RNA binding and function. Phosphorylation of Tat by EIF2AK2 is dependent on the prior activation of EIF2AK2 by dsRNA.

It is found in the host nucleus. It localises to the host nucleolus. Its subcellular location is the host cytoplasm. The protein resides in the secreted. Transcriptional activator that increases RNA Pol II processivity, thereby increasing the level of full-length viral transcripts. Recognizes a hairpin structure at the 5'-LTR of the nascent viral mRNAs referred to as the transactivation responsive RNA element (TAR) and recruits the cyclin T1-CDK9 complex (P-TEFb complex) that will in turn hyperphosphorylate the RNA polymerase II to allow efficient elongation. The CDK9 component of P-TEFb and other Tat-activated kinases hyperphosphorylate the C-terminus of RNA Pol II that becomes stabilized and much more processive. Other factors such as HTATSF1/Tat-SF1, SUPT5H/SPT5, and HTATIP2 are also important for Tat's function. Besides its effect on RNA Pol II processivity, Tat induces chromatin remodeling of proviral genes by recruiting the histone acetyltransferases (HATs) CREBBP, EP300 and PCAF to the chromatin. This also contributes to the increase in proviral transcription rate, especially when the provirus integrates in transcriptionally silent region of the host genome. To ensure maximal activation of the LTR, Tat mediates nuclear translocation of NF-kappa-B by interacting with host RELA. Through its interaction with host TBP, Tat may also modulate transcription initiation. Tat can reactivate a latently infected cell by penetrating in it and transactivating its LTR promoter. In the cytoplasm, Tat is thought to act as a translational activator of HIV-1 mRNAs. Functionally, extracellular circulating Tat can be endocytosed by surrounding uninfected cells via the binding to several surface receptors such as CD26, CXCR4, heparan sulfate proteoglycans (HSPG) or LDLR. Neurons are rarely infected, but they internalize Tat via their LDLR. Through its interaction with nuclear HATs, Tat is potentially able to control the acetylation-dependent cellular gene expression. Modulates the expression of many cellular genes involved in cell survival, proliferation or in coding for cytokines or cytokine receptors. Tat plays a role in T-cell and neurons apoptosis. Tat induced neurotoxicity and apoptosis probably contribute to neuroAIDS. Circulating Tat also acts as a chemokine-like and/or growth factor-like molecule that binds to specific receptors on the surface of the cells, affecting many cellular pathways. In the vascular system, Tat binds to ITGAV/ITGB3 and ITGA5/ITGB1 integrins dimers at the surface of endothelial cells and competes with bFGF for heparin-binding sites, leading to an excess of soluble bFGF. In Homo sapiens (Human), this protein is Protein Tat.